Reading from the N-terminus, the 284-residue chain is D-tagatose-1,6-bisphosphate aldolase subunit GatY (284 aa).

Asp82 functions as the Proton donor in the catalytic mechanism. Positions 83 and 180 each coordinate Zn(2+). Gly181 is a dihydroxyacetone phosphate binding site. His208 contacts Zn(2+). Dihydroxyacetone phosphate contacts are provided by residues 209-211 (GAS) and 230-233 (NVAT).

It belongs to the class II fructose-bisphosphate aldolase family. TagBP aldolase GatY subfamily. Forms a complex with GatZ. Zn(2+) is required as a cofactor.

The catalysed reaction is D-tagatofuranose 1,6-bisphosphate = D-glyceraldehyde 3-phosphate + dihydroxyacetone phosphate. The protein operates within carbohydrate metabolism; D-tagatose 6-phosphate degradation; D-glyceraldehyde 3-phosphate and glycerone phosphate from D-tagatose 6-phosphate: step 2/2. Functionally, catalytic subunit of the tagatose-1,6-bisphosphate aldolase GatYZ, which catalyzes the reversible aldol condensation of dihydroxyacetone phosphate (DHAP or glycerone-phosphate) with glyceraldehyde 3-phosphate (G3P) to produce tagatose 1,6-bisphosphate (TBP). Requires GatZ subunit for full activity and stability. Is involved in the catabolism of galactitol. The chain is D-tagatose-1,6-bisphosphate aldolase subunit GatY from Escherichia coli (strain K12 / MC4100 / BW2952).